A 489-amino-acid polypeptide reads, in one-letter code: Envelope glycoprotein C homolog (489 aa).

The N-terminal stretch at 1-32 (MVSNMRVLRVLRLTGWVGIFLVLSLQQTSCAG) is a signal peptide. The Virion surface portion of the chain corresponds to 33 to 455 (LPHNVDTHHI…YYDATPSARG (423 aa)). The tract at residues 59–94 (EVPNSPTTELSTTVATKTAVPTTESTSSSEAHRNSS) is disordered. Polar residues predominate over residues 60 to 69 (VPNSPTTELS). Positions 70-81 (TTVATKTAVPTT) are enriched in low complexity. N92, N112, N204, N346, and N392 each carry an N-linked (GlcNAc...) asparagine; by host glycan. The Ig-like domain occupies 250–348 (PASVDVLAPP…GDMISTSNAT (99 aa)). Residues 456 to 486 (MPMIVTITAVLGLALFLGIGIIITALCFYLP) traverse the membrane as a helical segment. The Cytoplasmic portion of the chain corresponds to 487–489 (GRN).

Belongs to the herpesviridae glycoprotein C family.

The protein resides in the virion membrane. The polypeptide is Envelope glycoprotein C homolog (gC) (Gallus gallus (Chicken)).